The chain runs to 574 residues: UvrABC system protein C (574 aa).

The 81-residue stretch at 12–92 (KKPGVYIFKN…IYIHKPKYNI (81 aa)) folds into the GIY-YIG domain. Residues 200 to 235 (EEVKNYLQKAMMDYAKIKNYEKAAQMRDTLFKLENL) enclose the UVR domain.

It belongs to the UvrC family. Interacts with UvrB in an incision complex.

The protein localises to the cytoplasm. In terms of biological role, the UvrABC repair system catalyzes the recognition and processing of DNA lesions. UvrC both incises the 5' and 3' sides of the lesion. The N-terminal half is responsible for the 3' incision and the C-terminal half is responsible for the 5' incision. The chain is UvrABC system protein C from Petrotoga mobilis (strain DSM 10674 / SJ95).